We begin with the raw amino-acid sequence, 113 residues long: Protein Wnt-10 (113 aa).

Residue serine 1 is the site of O-palmitoleoyl serine; by PORCN attachment. Cysteine 79 and cysteine 94 are joined by a disulfide.

Belongs to the Wnt family. Palmitoleoylation is required for efficient binding to frizzled receptors. Depalmitoleoylation leads to Wnt signaling pathway inhibition.

The protein localises to the secreted. The protein resides in the extracellular space. It is found in the extracellular matrix. Functionally, ligand for members of the frizzled family of seven transmembrane receptors. Probable developmental protein. May be a signaling molecule which affects the development of discrete regions of tissues. Is likely to signal over only few cell diameters. The sequence is that of Protein Wnt-10 (WNT-10) from Eptatretus stoutii (Pacific hagfish).